The sequence spans 1462 residues: Copper-transporting ATPase 2 (1462 aa).

The interval 1–23 (MDPRKNLASVGTMPEQERQVTAK) is disordered. At 1-655 (MDPRKNLASV…KTEIKQWKKS (655 aa)) the chain is on the cytoplasmic side. HMA domains are found at residues 68-134 (ATDV…FEAS), 153-219 (AVVK…FEAA), 267-333 (ATLP…PGHF), and 361-427 (RTAV…FEVS). Residues Cys-79, Cys-82, Cys-164, Cys-167, Cys-278, and Cys-281 each coordinate Cu(+). A disordered region spans residues 333–361 (FKVSLPDGVEENEPQSGSSQRHQEQGPGR). Cys-372 contributes to the Cu(+) binding site. The disordered stretch occupies residues 460 to 487 (KMAPDTRGLPTHQGPGHSSETPSSPGAT). Residues 475-487 (GHSSETPSSPGAT) show a composition bias toward polar residues. Residues Ser-478 and Ser-483 each carry the phosphoserine modification. HMA domains follow at residues 490–556 (QKCF…FEAS) and 566–632 (GDIE…FHAS). Residues Cys-501, Cys-504, Cys-577, and Cys-580 each coordinate Cu(+). The chain crosses the membrane as a helical span at residues 656–677 (FLCSLVFGIPVMGLMVYMLIPS). Residues 678 to 699 (STPQETMVLDHNIIPGLSVLNL) lie on the Extracellular side of the membrane. A helical membrane pass occupies residues 700–719 (IFFILCTFVQFLGGWYFYVQ). Residues 720-726 (AYKSLRH) lie on the Cytoplasmic side of the membrane. Residues 727 to 747 (RSANMDVLIVLATTIAYAYSL) traverse the membrane as a helical segment. At 748–766 (VILVVAVAEKAEKSPVTFF) the chain is on the extracellular side. The chain crosses the membrane as a helical span at residues 767-787 (DTPPMLFVFIALGRWLEHVAK). Topologically, residues 788-921 (SKTSEALAKL…KAPIQQLADR (134 aa)) are cytoplasmic. The helical transmembrane segment at 922–944 (FSGYFVPFIIIISTLTLVVWIVI) threads the bilayer. At 945–974 (GFVDFGVVQKYFPSPSKHISQTEVIIRFAF) the chain is on the extracellular side. The chain crosses the membrane as a helical span at residues 975–996 (QTSITVLCIACPCSLGLATPTA). Residues 997–1319 (VMVGTGVAAQ…LSKRTVRRIR (323 aa)) are Cytoplasmic-facing. The active-site 4-aspartylphosphate intermediate is the Asp-1029. Mg(2+) is bound by residues Asp-1264 and Asp-1268. The chain crosses the membrane as a helical span at residues 1320–1337 (VNLVLALIYNMVGIPIAA). Topologically, residues 1338–1348 (GVFMPIGIVLQ) are extracellular. Residues 1349 to 1368 (PWMGSAAMAASSVSVVLSSL) traverse the membrane as a helical segment. At 1369-1462 (QLKCYRKPDL…LSDRDEEQCI (94 aa)) the chain is on the cytoplasmic side. Phosphoserine occurs at positions 1395 and 1454.

It belongs to the cation transport ATPase (P-type) (TC 3.A.3) family. Type IB subfamily. As to quaternary structure, monomer. Interacts with COMMD1/MURR1. Interacts with DCTN4, in a copper-dependent manner. Interacts with ATOX1. Interacts (via C-terminus) with ZBTB16/PLZF. As to expression, detected in liver and kidney.

The protein resides in the golgi apparatus. It localises to the trans-Golgi network membrane. It is found in the late endosome. The enzyme catalyses Cu(+)(in) + ATP + H2O = Cu(+)(out) + ADP + phosphate + H(+). Functionally, copper ion transmembrane transporter involved in the export of copper out of the cells, such as the efflux of hepatic copper into the bile. The polypeptide is Copper-transporting ATPase 2 (Atp7b) (Mus musculus (Mouse)).